Consider the following 577-residue polypeptide: Sulfite reductase [NADPH] hemoprotein beta-component 2 (577 aa).

4 residues coordinate [4Fe-4S] cluster: Cys-441, Cys-447, Cys-486, and Cys-490. Cys-490 is a binding site for siroheme.

Belongs to the nitrite and sulfite reductase 4Fe-4S domain family. Alpha(8)-beta(8). The alpha component is a flavoprotein, the beta component is a hemoprotein. It depends on siroheme as a cofactor. The cofactor is [4Fe-4S] cluster.

It catalyses the reaction hydrogen sulfide + 3 NADP(+) + 3 H2O = sulfite + 3 NADPH + 4 H(+). It participates in sulfur metabolism; hydrogen sulfide biosynthesis; hydrogen sulfide from sulfite (NADPH route): step 1/1. Functionally, component of the sulfite reductase complex that catalyzes the 6-electron reduction of sulfite to sulfide. This is one of several activities required for the biosynthesis of L-cysteine from sulfate. This chain is Sulfite reductase [NADPH] hemoprotein beta-component 2, found in Pectobacterium carotovorum subsp. carotovorum (strain PC1).